The primary structure comprises 255 residues: Kallikrein-15 (255 aa).

The signal sequence occupies residues 1 to 15 (MWLLLPLSFLLTSTA). A propeptide spans 16 to 20 (QDGGK) (activation peptide). Residues 21–253 (LLEGEECAPH…YVKWIRETMK (233 aa)) form a serine protease region. Cysteine 46 and cysteine 62 are joined by a disulfide. Active-site charge relay system residues include histidine 61 and aspartate 105. 3 disulfides stabilise this stretch: cysteine 137/cysteine 214, cysteine 179/cysteine 193, and cysteine 204/cysteine 229. N-linked (GlcNAc...) asparagine glycosylation occurs at asparagine 170. The active-site Charge relay system is the serine 208. Residue asparagine 231 is glycosylated (N-linked (GlcNAc...) asparagine).

It belongs to the peptidase S1 family. Kallikrein subfamily.

The protein resides in the secreted. In terms of biological role, protease whose physiological substrate is not yet known. This chain is Kallikrein-15 (KLK15), found in Saguinus oedipus (Cotton-top tamarin).